Here is a 142-residue protein sequence, read N- to C-terminus: Large ribosomal subunit protein uL13 (142 aa).

It belongs to the universal ribosomal protein uL13 family. In terms of assembly, part of the 50S ribosomal subunit.

Functionally, this protein is one of the early assembly proteins of the 50S ribosomal subunit, although it is not seen to bind rRNA by itself. It is important during the early stages of 50S assembly. The sequence is that of Large ribosomal subunit protein uL13 from Alkaliphilus metalliredigens (strain QYMF).